Reading from the N-terminus, the 755-residue chain is Sentrin-specific protease 5 (755 aa).

The tract at residues 269 to 329 (QKVTGDHQET…NSHVPDGHTK (61 aa)) is disordered. Basic and acidic residues predominate over residues 272–283 (TGDHQETLRENG). Residues 563-724 (FYNKHMLDMD…VFVLQYCKCL (162 aa)) form a protease region. Catalysis depends on residues His646, Asp663, and Cys713.

It belongs to the peptidase C48 family. As to quaternary structure, interacts with CCAR2.

Its subcellular location is the nucleus. It localises to the nucleolus. Functionally, protease that catalyzes two essential functions in the SUMO pathway: processing of full-length SUMO3 to its mature form and deconjugation of SUMO2 and SUMO3 from targeted proteins. Has weak proteolytic activity against full-length SUMO1 or SUMO1 conjugates. Required for cell division. In Macaca fascicularis (Crab-eating macaque), this protein is Sentrin-specific protease 5 (SENP5).